Reading from the N-terminus, the 308-residue chain is Eugenol synthase 1 (308 aa).

NADP(+) contacts are provided by residues T13–I16, V35–K45, R36, Q86–Q88, S111–F113, K133, and N153–F155. The Proton donor/acceptor role is filled by K133.

This sequence belongs to the NmrA-type oxidoreductase family. In flowers, mostly expressed in limbs, and, to a lower extent, in tubes.

It carries out the reaction eugenol + a carboxylate + NADP(+) = a coniferyl ester + NADPH. The enzyme catalyses eugenol + acetate + NADP(+) = (E)-coniferyl acetate + NADPH. It functions in the pathway aromatic compound metabolism; phenylpropanoid biosynthesis. Involved in the biosynthesis of the floral volatile eugenol. Catalyzes the synthesis of the phenylpropene eugenol from coniferyl acetate. Phenylpropenes are produced by plants as defense compounds with antimicrobial and antianimal properties, or as floral attractants of pollinators. The polypeptide is Eugenol synthase 1 (Petunia hybrida (Petunia)).